A 186-amino-acid chain; its full sequence is Ribosome-recycling factor (186 aa).

This sequence belongs to the RRF family.

The protein resides in the cytoplasm. In terms of biological role, responsible for the release of ribosomes from messenger RNA at the termination of protein biosynthesis. May increase the efficiency of translation by recycling ribosomes from one round of translation to another. This Beijerinckia indica subsp. indica (strain ATCC 9039 / DSM 1715 / NCIMB 8712) protein is Ribosome-recycling factor.